Here is a 144-residue protein sequence, read N- to C-terminus: MAKKIIGYIKLQIPAGKANPSPPVGPALGQRGLNIMEFCKAFNAATQGMEPGLPIPVVITAFADKSFTFVMKTPPASILLKKAAGLQKGSSNPLTNKVGKLTRAQLEEIAKTKEPDLTAADLDAAVRTIAGSARSMGLDVEGVV.

This sequence belongs to the universal ribosomal protein uL11 family. In terms of assembly, part of the ribosomal stalk of the 50S ribosomal subunit. Interacts with L10 and the large rRNA to form the base of the stalk. L10 forms an elongated spine to which L12 dimers bind in a sequential fashion forming a multimeric L10(L12)X complex. One or more lysine residues are methylated.

Its function is as follows. Forms part of the ribosomal stalk which helps the ribosome interact with GTP-bound translation factors. In Neisseria meningitidis serogroup A / serotype 4A (strain DSM 15465 / Z2491), this protein is Large ribosomal subunit protein uL11.